The primary structure comprises 103 residues: Large ribosomal subunit protein bL21 (103 aa).

It belongs to the bacterial ribosomal protein bL21 family. Part of the 50S ribosomal subunit. Contacts protein L20.

This protein binds to 23S rRNA in the presence of protein L20. This chain is Large ribosomal subunit protein bL21, found in Serratia proteamaculans (strain 568).